The primary structure comprises 303 residues: Cyclin-dependent kinase B1-1 (303 aa).

Residues 4–295 (YEKLEKVGEG…AKAAMEHPYF (292 aa)) enclose the Protein kinase domain. Residues 10-18 (VGEGTYGKV) and lysine 33 contribute to the ATP site. Residue threonine 14 is modified to Phosphothreonine. The residue at position 15 (tyrosine 15) is a Phosphotyrosine. Aspartate 136 serves as the catalytic Proton acceptor. Threonine 170 is subject to Phosphothreonine.

The protein belongs to the protein kinase superfamily. CMGC Ser/Thr protein kinase family. CDC2/CDKX subfamily. In terms of tissue distribution, expressed in actively dividing cells: root and shoot apical meristems, and young leaves.

It catalyses the reaction L-seryl-[protein] + ATP = O-phospho-L-seryl-[protein] + ADP + H(+). It carries out the reaction L-threonyl-[protein] + ATP = O-phospho-L-threonyl-[protein] + ADP + H(+). The catalysed reaction is [DNA-directed RNA polymerase] + ATP = phospho-[DNA-directed RNA polymerase] + ADP + H(+). This is Cyclin-dependent kinase B1-1 (CDKB1-1) from Oryza sativa subsp. japonica (Rice).